The primary structure comprises 255 residues: Probable pyridoxal 5'-phosphate synthase subunit PDX2 (255 aa).

An L-glutamine-binding site is contributed by Gly46–Ser48. The Nucleophile role is filled by Cys78. Residues Arg108 and Ile142 to Arg143 each bind L-glutamine. Catalysis depends on charge relay system residues His202 and Glu204. Residues Gly225–Gln255 are disordered.

Belongs to the glutaminase PdxT/SNO family. As to quaternary structure, interacts with PDX1.1 or PDX1.3, but not with PDX1.2. Binds to RPA2A. As to expression, strongly expressed in roots, stems, leaves and flowers.

It is found in the cytoplasm. The catalysed reaction is aldehydo-D-ribose 5-phosphate + D-glyceraldehyde 3-phosphate + L-glutamine = pyridoxal 5'-phosphate + L-glutamate + phosphate + 3 H2O + H(+). It catalyses the reaction L-glutamine + H2O = L-glutamate + NH4(+). It participates in cofactor biosynthesis; pyridoxal 5'-phosphate biosynthesis. In terms of biological role, catalyzes the hydrolysis of glutamine to glutamate and ammonia as part of the biosynthesis of pyridoxal 5'-phosphate. The resulting ammonia molecule is channeled to the active site of PDX1. Involved in the indirect resistance to singlet oxygen-generating photosensitizers. This chain is Probable pyridoxal 5'-phosphate synthase subunit PDX2 (PDX2), found in Arabidopsis thaliana (Mouse-ear cress).